A 104-amino-acid chain; its full sequence is L-rhamnose mutarotase (104 aa).

Y18 is a binding site for substrate. Residue H22 is the Proton donor of the active site. Substrate is bound by residues Y41 and 76 to 77 (WW).

It belongs to the rhamnose mutarotase family. In terms of assembly, homodimer.

The protein resides in the cytoplasm. It catalyses the reaction alpha-L-rhamnose = beta-L-rhamnose. It participates in carbohydrate metabolism; L-rhamnose metabolism. In terms of biological role, involved in the anomeric conversion of L-rhamnose. This Phocaeicola vulgatus (strain ATCC 8482 / DSM 1447 / JCM 5826 / CCUG 4940 / NBRC 14291 / NCTC 11154) (Bacteroides vulgatus) protein is L-rhamnose mutarotase.